We begin with the raw amino-acid sequence, 592 residues long: A-type ATP synthase subunit A (592 aa).

233–240 (GPFGSGKT) is an ATP binding site.

It belongs to the ATPase alpha/beta chains family. Has multiple subunits with at least A(3), B(3), C, D, E, F, H, I and proteolipid K(x).

It localises to the cell membrane. The enzyme catalyses ATP + H2O + 4 H(+)(in) = ADP + phosphate + 5 H(+)(out). Functionally, component of the A-type ATP synthase that produces ATP from ADP in the presence of a proton gradient across the membrane. The A chain is the catalytic subunit. The protein is A-type ATP synthase subunit A of Saccharolobus solfataricus (strain ATCC 35092 / DSM 1617 / JCM 11322 / P2) (Sulfolobus solfataricus).